The following is a 628-amino-acid chain: DNA mismatch repair protein MutL (628 aa).

The disordered stretch occupies residues 332–416; it reads PTSAMPAPGN…ASTAPPLSEE (85 aa). Residues 375–396 show a composition bias toward polar residues; the sequence is EGSSRSDVPYPSASQVTETTDS.

The protein belongs to the DNA mismatch repair MutL/HexB family.

Its function is as follows. This protein is involved in the repair of mismatches in DNA. It is required for dam-dependent methyl-directed DNA mismatch repair. May act as a 'molecular matchmaker', a protein that promotes the formation of a stable complex between two or more DNA-binding proteins in an ATP-dependent manner without itself being part of a final effector complex. This chain is DNA mismatch repair protein MutL, found in Syntrophotalea carbinolica (strain DSM 2380 / NBRC 103641 / GraBd1) (Pelobacter carbinolicus).